The following is a 1113-amino-acid chain: Histone deacetylase 5 (1113 aa).

Positions 1 to 22 (MNSPNESDGMSGREPSLGILPR) are disordered. K35 participates in a covalent cross-link: Glycyl lysine isopeptide (Lys-Gly) (interchain with G-Cter in SUMO2). 2 disordered regions span residues 39 to 63 (PGAM…RGAL) and 187 to 272 (KEPT…SSPL). Over residues 238-249 (DSRDDFPLRKTA) the composition is skewed to basic and acidic residues. Position 250 is a phosphoserine; by AMPK, CaMK1, SIK1 and PKD/PRKD1 (S250). Positions 263 to 272 (KVAERRSSPL) are enriched in basic and acidic residues. Phosphothreonine; by PKC is present on T283. The tract at residues 472–494 (RTVGKLPRHRPLSRTQSSPLPQS) is disordered. Positions 484–494 (SRTQSSPLPQS) are enriched in low complexity. S488 bears the Phosphoserine; by AMPK, CaMK1, SIK1 and PKD/PRKD1 mark. An N6-acetyllysine modification is found at K523. The disordered stretch occupies residues 526 to 611 (TKTGELSRQP…PDEGPDLEES (86 aa)). Over residues 571 to 610 (STQEDLEEEEEEEEEEEEDCIQVKDEDGESGPDEGPDLEE) the composition is skewed to acidic residues. Phosphoserine occurs at positions 600 and 650. Residues 675–1019 (GVVYDTFMLK…VSALLSVELQ (345 aa)) form a histone deacetylase region. Zn(2+) is bound by residues C687, C689, H695, and C772. The active site involves H824. The short motif at 1072–1113 (EEAETVSAMALLSVGAEQAQAVATQEHSPRPAEEPMEQEPAL) is the Nuclear export signal element. The disordered stretch occupies residues 1088–1113 (EQAQAVATQEHSPRPAEEPMEQEPAL). S1099 is modified (phosphoserine).

It belongs to the histone deacetylase family. HD type 2 subfamily. Interacts with AHRR, BAHD1, BCOR, HDAC7, HDAC9, CTBP1, MEF2C, NCOR2, NRIP1, PHB2 and a 14-3-3 chaperone protein. Interacts with BCL6, DDIT3/CHOP, GRK5, KDM5B and MYOCD. Interacts with EP300 in the presence of TFAP2C. Interacts with ANKRA2. Interacts with CUL7 (as part of the 3M complex); negatively regulated by ANKRA2. Interacts with ZBTB7B; the interaction allows the recruitment of HDAC4 on CD8 loci for deacetylation and possible inhibition of CD8 genes expression. Interacts with RARA. Phosphorylated by AMPK, CaMK1, SIK1 and PRKD1 at Ser-250 and Ser-488. The phosphorylation is required for the export to the cytoplasm and inhibition. Phosphorylated by the PKC kinases PKN1 and PKN2, impairing nuclear import. Phosphorylated by GRK5, leading to nuclear export of HDAC5 and allowing MEF2-mediated transcription. In terms of processing, ubiquitinated. Polyubiquitination however does not lead to its degradation.

The protein resides in the nucleus. The protein localises to the cytoplasm. It carries out the reaction N(6)-acetyl-L-lysyl-[histone] + H2O = L-lysyl-[histone] + acetate. Its function is as follows. Responsible for the deacetylation of lysine residues on the N-terminal part of the core histones (H2A, H2B, H3 and H4). Histone deacetylation gives a tag for epigenetic repression and plays an important role in transcriptional regulation, cell cycle progression and developmental events. Histone deacetylases act via the formation of large multiprotein complexes. Involved in muscle maturation by repressing transcription of myocyte enhancer MEF2C. During muscle differentiation, it shuttles into the cytoplasm, allowing the expression of myocyte enhancer factors. Serves as a corepressor of RARA and causes its deacetylation. In association with RARA, plays a role in the repression of microRNA-10a and thereby in the inflammatory response. This is Histone deacetylase 5 (Hdac5) from Mus musculus (Mouse).